Consider the following 150-residue polypeptide: Troponin C, isoform 2A (150 aa).

Residue Met1 is modified to N-acetylmethionine. 4 EF-hand domains span residues 7–42, 43–78, 83–118, and 119–150; these read EQIG…MGVK, ISEK…FLIE, ALKT…LDNR, and LTEE…MMNG. Residues Asp56, Asp58, Ser60, Glu62, and Glu67 each contribute to the Ca(2+) site. Residues Asp132, Asp134, Ser136, Thr138, and Glu143 each coordinate Ca(2+).

Belongs to the troponin C family.

Troponin is the central regulatory protein of striated muscle contraction. Tn consists of three components: Tn-I which is the inhibitor of actomyosin ATPase, Tn-T which contains the binding site for tropomyosin and Tn-C. The binding of calcium to Tn-C abolishes the inhibitory action of Tn on actin filaments. This is Troponin C, isoform 2A from Homarus americanus (American lobster).